Consider the following 284-residue polypeptide: MTAIKLDGNLYRGEIFADLEQRVAALKEKGIVPGLATVLVGDDPASHSYVKMKHRDCEQIGVNSIRKDLPADVTQEELFAVIDELNNDDSCTGYIVQLPLPKHLDENAVLERIDPAKDADGLHPVNLGKLVLNEPAPLPCTPNGSISLLRRFGVELDGAKVVVIGRGVTVGRPIGLMLTRRSENSTVTLCHTGTKDLAAETRAADVIIAAAGQPHMLTADMVKPGAAVLDVGVSRKDGKLLGDVHPDVWEVAGAVSPNPGGVGPLTRAFLVHNVVERAEKLAGL.

NADP(+) is bound by residues 165–167 (GRG), Thr-192, and Val-233.

This sequence belongs to the tetrahydrofolate dehydrogenase/cyclohydrolase family. As to quaternary structure, homodimer.

The enzyme catalyses (6R)-5,10-methylene-5,6,7,8-tetrahydrofolate + NADP(+) = (6R)-5,10-methenyltetrahydrofolate + NADPH. It carries out the reaction (6R)-5,10-methenyltetrahydrofolate + H2O = (6R)-10-formyltetrahydrofolate + H(+). It functions in the pathway one-carbon metabolism; tetrahydrofolate interconversion. Its function is as follows. Catalyzes the oxidation of 5,10-methylenetetrahydrofolate to 5,10-methenyltetrahydrofolate and then the hydrolysis of 5,10-methenyltetrahydrofolate to 10-formyltetrahydrofolate. The polypeptide is Bifunctional protein FolD (Corynebacterium glutamicum (strain R)).